Reading from the N-terminus, the 394-residue chain is uncharacterized protein (394 aa).

4 N-linked (GlcNAc...) asparagine glycosylation sites follow: Asn3, Asn14, Asn20, and Asn25. Helical transmembrane passes span Ala64–Ile84, Phe101–Val121, Ile133–Ile153, Ile180–Phe200, Val228–Tyr248, and Trp256–Glu276. N-linked (GlcNAc...) asparagine glycosylation is found at Asn283 and Asn286. A helical transmembrane segment spans residues Ala291 to Ile311. N-linked (GlcNAc...) asparagine glycosylation is present at Asn344.

Its subcellular location is the membrane. This is an uncharacterized protein from Schizosaccharomyces pombe (strain 972 / ATCC 24843) (Fission yeast).